Here is a 966-residue protein sequence, read N- to C-terminus: SH3 domain-binding protein 4 (966 aa).

In terms of domain architecture, SH3 1 spans 57–116 (GAAREVVAIKDCCPSSFTTLKFSKGDRLYVLDSSGAEWWYAHNNTEMGYIPAAYVEPINY). One can recognise a ZU5 domain in the interval 322–457 (TNIVCRLDSS…LEPCMYVCVV (136 aa)). One can recognise an SH3 2 domain in the interval 657-727 (NNLKFGKLIK…HAKNVLVVGK (71 aa)).

Homodimer or homooligomer.

It localises to the membrane. It is found in the clathrin-coated pit. The protein resides in the cytoplasmic vesicle. Its subcellular location is the clathrin-coated vesicle. The protein localises to the nucleus. Functionally, possible role in regulating endocytosis of the transferrin receptor at the plasma membrane. Alternatively, may function as a negative regulator of the amino acid-induced TOR signaling by inhibiting the formation of active Rag GTPase complexes. Preferentially binds inactive Rag GTPase complexes and prevents their interaction with the mTORC1 complex inhibiting its relocalization to lysosomes and its activation. Thereby, may indirectly regulate cell growth, proliferation and autophagy. This is SH3 domain-binding protein 4 (sh3bp4) from Seriola quinqueradiata (Five-ray yellowtail).